The sequence spans 496 residues: Omega-crystallin (496 aa).

The protein belongs to the aldehyde dehydrogenase family. As to expression, lens.

Omega-crystallins are structural components of squids and octopi eye lens. Contains relatively little if any DHAL activity. The sequence is that of Omega-crystallin from Enteroctopus dofleini (North Pacific giant octopus).